A 433-amino-acid polypeptide reads, in one-letter code: L-saccharopine oxidase (433 aa).

An N-terminal signal peptide occupies residues 1–18 (MSRTIVIVGCGVFGLSTA). Asn-24, Asn-119, Asn-188, and Asn-229 each carry an N-linked (GlcNAc...) asparagine glycan.

This sequence belongs to the MSOX/MTOX family. In terms of assembly, monomer. Requires FAD as cofactor.

It is found in the secreted. It localises to the cytoplasm. Its subcellular location is the nucleus. The enzyme catalyses L-saccharopine + O2 + H2O = (S)-2-amino-6-oxohexanoate + L-glutamate + H2O2. The chain is L-saccharopine oxidase from Schizosaccharomyces pombe (strain 972 / ATCC 24843) (Fission yeast).